Here is a 537-residue protein sequence, read N- to C-terminus: Leucine-rich repeat LGI family member 4 (537 aa).

A signal peptide spans 1–19 (MGGAGILLFLLAWAGAGVA). 4 LRR repeats span residues 53–74 (TLLS…SFLK), 77–98 (SLHL…AFIG), 101–122 (YLQY…ALRG), and 125–146 (SLTH…LFRG). The LRRCT domain maps to 158 to 208 (NPFQCDCRVLWLLQWMPTVNASVGTGACAGPPAVAQIQLNHLDPKKFKCRA). N177 carries N-linked (GlcNAc...) asparagine glycosylation. EAR repeat units follow at residues 210 to 252 (ELSW…VWDY), 256 to 298 (RFRP…SRSS), 302 to 349 (RLTP…CRDG), 351 to 394 (GFYP…HWVG), 396 to 439 (RFER…RWDG), 441 to 483 (MFRL…RFES), and 487 to 532 (ILEP…QHHE).

As to quaternary structure, can bind to ADAM11, ADAM22 and ADAM23. In terms of tissue distribution, brain. Expressed in the entire developing peripheral nerves. Strongly expressed in the trigeminal nerve and ganglion and particularly abundant in the boundary cap cells - a transient population of cells that contributes to the Schwann cell population of the dorsal root nerve.

It localises to the secreted. Functionally, component of Schwann cell signaling pathway(s) that controls axon segregation and myelin formation. In Mus musculus (Mouse), this protein is Leucine-rich repeat LGI family member 4 (Lgi4).